Here is a 572-residue protein sequence, read N- to C-terminus: MARTTFLVSVSLFVSAVLARTVEYNLKISNGKIAPDGVERDATLVNGGYPGPLIFANKGDTLKVKVQNKLTNPDMYRTTSIHWHGLLQHRNADDDGPAFVTQCPIVPQASYTYTMPLGDQTGTYWYHSHLSSQYVDGLRGPLVIYDPKDPHRRLYDIDDEKTVLIIGDWYHTSSKAILATGNITLQQPDSATINGKGRFDPDNTPANPNTLYTLKVKRGKRYRLRVINSSAIASFRMSIQGHKMTVIAADGVSTKPYQVDSFDILAGQRIDAVVEANQEPDTYWINAPLTNVANKTAQALLIYEDDRRPYHPPKGPYRKWSVSEAIIKYWKHKHGRGLLSGHGGLKARMMEGSLHLHGRRDIVKRQNETTTVVMDETKLVPLEHPGAACGSKPADLVIDLTFGVNFTTGHWMINGIPHKSPDMPTLLKILTDTDGVTESDFTQPEHTIILPKNKCVEFNIKGNSGLGIVHPIHLHGHTFDVVQFGNNPPNYVNPPRRDVVGATDEGVRFQFKTDNPGPWFLHCHIDWHLEEGFAMVFAEAPEAIKGGPKSVPVDRQWKDLCRKYGSLPAGFL.

The N-terminal stretch at 1–18 (MARTTFLVSVSLFVSAVL) is a signal peptide. Plastocyanin-like domains are found at residues 21–145 (TVEY…LVIY) and 157–304 (IDDE…LIYE). Positions 82, 84, 127, and 129 each coordinate Cu cation. Residues Cys-103 and Cys-561 are joined by a disulfide bond. 5 N-linked (GlcNAc...) asparagine glycosylation sites follow: Asn-182, Asn-228, Asn-294, Asn-367, and Asn-405. The Plastocyanin-like 3 domain occupies 422-540 (DMPTLLKILT…EGFAMVFAEA (119 aa)). Cu cation-binding residues include His-470, His-473, His-475, His-522, Cys-523, His-524, and His-528.

It belongs to the multicopper oxidase family. As to quaternary structure, homodimer. Cu cation is required as a cofactor. In mycelia, at a lower level than LCC4.

It localises to the secreted. It catalyses the reaction 4 hydroquinone + O2 = 4 benzosemiquinone + 2 H2O. Functionally, lignin degradation and detoxification of lignin-derived products. The polypeptide is Laccase-3 (LCC3) (Thanatephorus cucumeris (Black scurf of potato)).